Here is a 258-residue protein sequence, read N- to C-terminus: Acetylglutamate kinase (258 aa).

Substrate-binding positions include 44–45 (GG), Arg66, and Asn158. ATP contacts are provided by residues 181-186 (DVSGIL) and 209-211 (IIT).

This sequence belongs to the acetylglutamate kinase family. ArgB subfamily. Homodimer.

It is found in the cytoplasm. The catalysed reaction is N-acetyl-L-glutamate + ATP = N-acetyl-L-glutamyl 5-phosphate + ADP. The protein operates within amino-acid biosynthesis; L-arginine biosynthesis; N(2)-acetyl-L-ornithine from L-glutamate: step 2/4. Its function is as follows. Catalyzes the ATP-dependent phosphorylation of N-acetyl-L-glutamate. This Shigella flexneri serotype 5b (strain 8401) protein is Acetylglutamate kinase.